Consider the following 124-residue polypeptide: WAP four-disulfide core domain protein 2 (124 aa).

An N-terminal signal peptide occupies residues 1–27 (MPACRPGPLAGALLLGLLLLGLPRVPG). WAP domains lie at 29–73 (EVEK…CHLP) and 74–123 (NEKE…VTPI). Intrachain disulfides connect Cys36/Cys62, Cys45/Cys66, Cys49/Cys61, Cys55/Cys70, Cys80/Cys110, Cys93/Cys114, Cys97/Cys109, and Cys103/Cys119. N-linked (GlcNAc...) asparagine glycosylation occurs at Asn44.

In terms of assembly, homotrimer; disulfide-linked. As to expression, epididymis. Highest levels are found in the caput and proximal cauda regions. Lower levels in the distal cauda. Not detected in the efferent ducts.

It is found in the secreted. Functionally, broad range protease inhibitor. Possible function in sperm maturation. The sequence is that of WAP four-disulfide core domain protein 2 (WFDC2) from Canis lupus familiaris (Dog).